Consider the following 693-residue polypeptide: Elongation factor G (693 aa).

A tr-type G domain is found at 8–282 (EKTRNIGIMA…AVIDYLPSPL (275 aa)). GTP contacts are provided by residues 17 to 24 (AHVDAGKT), 81 to 85 (DTPGH), and 135 to 138 (NKMD).

This sequence belongs to the TRAFAC class translation factor GTPase superfamily. Classic translation factor GTPase family. EF-G/EF-2 subfamily.

It is found in the cytoplasm. Catalyzes the GTP-dependent ribosomal translocation step during translation elongation. During this step, the ribosome changes from the pre-translocational (PRE) to the post-translocational (POST) state as the newly formed A-site-bound peptidyl-tRNA and P-site-bound deacylated tRNA move to the P and E sites, respectively. Catalyzes the coordinated movement of the two tRNA molecules, the mRNA and conformational changes in the ribosome. This is Elongation factor G from Streptococcus gordonii (strain Challis / ATCC 35105 / BCRC 15272 / CH1 / DL1 / V288).